The following is a 554-amino-acid chain: MNQLAMVNTTITRPLANYHSSVWGNYFLSYTPQLTETSSQEKRELEELKEKVRQMLVETPDNSTQKLVLIDTIQRLGVAYHFENHIKISIQNIFDEFEKNKNKDNDDDLCVVALRFRLVRGQRHYMSSDVFTRFTNDDGKFKETLTKDVSGLLNLYEATHLRVHGEEILEDALSFTVTHLKSMSPKLDNSLKAQVSEALFQPIHTNIPRVVARKYIRIYENIESHDDLLLKFAKLDFHILQKMHQRELSELTRWWKYLDYENKYPYARDKLVECYFWATGVYFGPQYKRARKTLTKLIVIITITDDLYDAYATYDELVPYTDAVERCEISAMHSISPYMRPLYQVFLDYFDEMEKELTKDGKAHYVYYAKIETNKWIKSYLKEAEWLKNDIIPKCEEYKRNATITVSSQMILITCLIVAGEFISKETFEWMINESLIAPASSLINRLKDDIIGHEHEQQREHGASFIECYVKEYRASKQEAYVEARRQIANAWKDINTDYLHATQVPTFVLEPALNLSRLVDILQEDDFTDSQNFLKDTITLLFVDSVNSTSCG.

Residues D305, D309, D449, and E457 each coordinate Mg(2+). The DDXXD motif motif lies at D305 to D309.

It belongs to the terpene synthase family. Tpsa subfamily. It depends on Mg(2+) as a cofactor. The cofactor is Mn(2+). As to expression, mostly expressed in stem trichomes.

The catalysed reaction is (2E,6E)-farnesyl diphosphate = beta-bisabolene + diphosphate. It carries out the reaction (2E,6E)-farnesyl diphosphate = (Z)-alpha-bisabolene + diphosphate. The enzyme catalyses (2E,6E)-farnesyl diphosphate = beta-acoradiene + diphosphate. It catalyses the reaction (2E,6E)-farnesyl diphosphate = (E)-gamma-bisabolene + diphosphate. The catalysed reaction is (2E,6E)-farnesyl diphosphate = (E)-beta-farnesene + diphosphate. It carries out the reaction (2E,6E)-farnesyl diphosphate = (Z)-beta-farnesene + diphosphate. The enzyme catalyses (2E)-geranyl diphosphate = limonene + diphosphate. It catalyses the reaction (2E)-geranyl diphosphate = beta-myrcene + diphosphate. It functions in the pathway secondary metabolite biosynthesis; terpenoid biosynthesis. In terms of biological role, sesquiterpene synthase involved in the biosynthesis of volatile compounds. Mediates the conversion of (2E,6E)-farnesyl diphosphate ((EE)-FPP) into beta-bisabolene, beta-farnesene, (E)-gamma-bisabolene, beta-acoradiene, selinene and (Z)-alpha-bisabolene. Low or no activity with (2Z,6Z)-farnesyl diphosphate ((ZZ)-FPP). Can act with a low efficiency as a monoterpene synthase with geranyl diphosphate (GPP) as substrate, thus producing beta-myrcene and limonene. This chain is Sesquiterpene synthase 14a, found in Solanum habrochaites (Wild tomato).